A 637-amino-acid polypeptide reads, in one-letter code: Chaperone protein HtpG (637 aa).

Residues 1–338 (MMELKMHNVK…SPDLPLNISR (338 aa)) are a; substrate-binding. The segment at 339 to 558 (ETLQNNRVVE…EGAMDLRMER (220 aa)) is b. Residues 493-512 (KFSPEEKDKENKSDEERAEG) form a disordered region. A c region spans residues 559 to 637 (FLREQNQLNY…LNNLLGKVII (79 aa)).

It belongs to the heat shock protein 90 family. In terms of assembly, homodimer.

It localises to the cytoplasm. Functionally, molecular chaperone. Has ATPase activity. This is Chaperone protein HtpG from Wolbachia sp. subsp. Brugia malayi (strain TRS).